A 243-amino-acid polypeptide reads, in one-letter code: Proteasome subunit alpha (243 aa).

This sequence belongs to the peptidase T1A family. In terms of assembly, the 20S proteasome core is composed of 14 alpha and 14 beta subunits that assemble into four stacked heptameric rings, resulting in a barrel-shaped structure. The two inner rings, each composed of seven catalytic beta subunits, are sandwiched by two outer rings, each composed of seven alpha subunits. The catalytic chamber with the active sites is on the inside of the barrel. Has a gated structure, the ends of the cylinder being occluded by the N-termini of the alpha-subunits. Is capped at one or both ends by the proteasome regulatory ATPase, PAN.

It localises to the cytoplasm. The formation of the proteasomal ATPase PAN-20S proteasome complex, via the docking of the C-termini of PAN into the intersubunit pockets in the alpha-rings, triggers opening of the gate for substrate entry. Interconversion between the open-gate and close-gate conformations leads to a dynamic regulation of the 20S proteasome proteolysis activity. In terms of biological role, component of the proteasome core, a large protease complex with broad specificity involved in protein degradation. This Pyrobaculum aerophilum (strain ATCC 51768 / DSM 7523 / JCM 9630 / CIP 104966 / NBRC 100827 / IM2) protein is Proteasome subunit alpha.